Reading from the N-terminus, the 284-residue chain is Putative ABC transporter ATP-binding protein MG468.1 homolog (284 aa).

The ABC transporter domain maps to 53–284 (VLFKGVCKAV…PKTINEINWV (232 aa)). 89-96 (GKSGSGKT) contacts ATP.

This sequence belongs to the ABC transporter superfamily.

This chain is Putative ABC transporter ATP-binding protein MG468.1 homolog, found in Mycoplasma pneumoniae (strain ATCC 29342 / M129 / Subtype 1) (Mycoplasmoides pneumoniae).